A 506-amino-acid polypeptide reads, in one-letter code: Histone acetyltransferase esa-1 (506 aa).

Residues 1–24 (MSPPGGDATVGSDEKRQKGKATPD) are disordered. A Tudor-knot domain is found at 26-78 (IKMGCIAMVMKEGQLRRAEILSIKDTKSGRQFYCNFDNFNKRLDEWVPAARID). A disordered region spans residues 82-215 (DVEWPNPDKD…LRTSGSMTQN (134 aa)). The segment covering 87–98 (NPDKDKQKDAKT) has biased composition (basic and acidic residues). Residues 109 to 120 (QPSKKNNQKKAS) are compositionally biased toward basic residues. The span at 167 to 178 (GGDKGVKRKADE) shows a compositional bias: basic and acidic residues. Residues 220-494 (SRIRNISKVE…IDPERIQWKP (275 aa)) form the MYST-type HAT domain. The segment at 253–278 (IYICEFCLSYYGELKSFVRHRQKCTL) adopts a C2HC MYST-type zinc-finger fold. Residues 303–324 (RTWCRNLCLLSKMFLDHKTLYY) carry the ESA1-RPD3 motif motif. Lys320 bears the N6-acetyllysine; by autocatalysis mark. Acetyl-CoA is bound by residues 361–365 (ACILT) and 370–376 (QRKGYGR). The Proton donor/acceptor role is filled by Glu396. Residue Ser400 participates in acetyl-CoA binding.

It belongs to the MYST (SAS/MOZ) family. As to quaternary structure, component of the NuA4 histone acetyltransferase complex. Post-translationally, autoacetylation at Lys-320 is required for proper function.

The protein localises to the nucleus. It is found in the chromosome. The catalysed reaction is L-lysyl-[histone] + acetyl-CoA = N(6)-acetyl-L-lysyl-[histone] + CoA + H(+). It catalyses the reaction L-lysyl-[protein] + acetyl-CoA = N(6)-acetyl-L-lysyl-[protein] + CoA + H(+). The enzyme catalyses 2-hydroxyisobutanoyl-CoA + L-lysyl-[protein] = N(6)-(2-hydroxyisobutanoyl)-L-lysyl-[protein] + CoA + H(+). It carries out the reaction (2E)-butenoyl-CoA + L-lysyl-[protein] = N(6)-(2E)-butenoyl-L-lysyl-[protein] + CoA + H(+). Functionally, catalytic component of the NuA4 histone acetyltransferase (HAT) complex which is involved in epigenetic transcriptional activation of selected genes principally by acetylation of nucleosomal histones H4, H3, H2B, H2A and H2A variant H2A.Z. Acetylates histone H4 to form H4K5ac, H4K8ac, H4K12ac and H4K16ac, histone H3 to form H3K14ac, and histone H2A to form H2AK4ac and H2AK7ac. The NuA4 complex is involved in the DNA damage response and is required for chromosome segregation. The NuA4 complex plays a direct role in repair of DNA double-strand breaks (DSBs) through homologous recombination. Recruitment to promoters depends on H3K4me. Also acetylates non-histone proteins. In addition to protein acetyltransferase, can use different acyl-CoA substrates, such as 2-hydroxyisobutanoyl-CoA (2-hydroxyisobutyryl-CoA) or (2E)-butenoyl-CoA (crotonyl-CoA), and is able to mediate protein 2-hydroxyisobutyrylation and crotonylation, respectively. This is Histone acetyltransferase esa-1 (esa-1) from Neurospora crassa (strain ATCC 24698 / 74-OR23-1A / CBS 708.71 / DSM 1257 / FGSC 987).